Here is a 461-residue protein sequence, read N- to C-terminus: Glycine--tRNA ligase (461 aa).

Substrate is bound by residues Arg99 and Glu173. ATP contacts are provided by residues 205 to 207 (RNE), 215 to 220 (FRTREF), 289 to 290 (EL), and 333 to 336 (GADR). 220–224 (FEQME) serves as a coordination point for substrate. A substrate-binding site is contributed by 329–333 (EPSLG).

The protein belongs to the class-II aminoacyl-tRNA synthetase family. As to quaternary structure, homodimer.

The protein resides in the cytoplasm. It carries out the reaction tRNA(Gly) + glycine + ATP = glycyl-tRNA(Gly) + AMP + diphosphate. In terms of biological role, catalyzes the attachment of glycine to tRNA(Gly). The sequence is that of Glycine--tRNA ligase from Lysinibacillus sphaericus (strain C3-41).